A 525-amino-acid polypeptide reads, in one-letter code: Probable histidine ammonia-lyase (525 aa).

Positions 145-147 (ASG) form a cross-link, 5-imidazolinone (Ala-Gly). The residue at position 146 (Ser146) is a 2,3-didehydroalanine (Ser).

Belongs to the PAL/histidase family. In terms of processing, contains an active site 4-methylidene-imidazol-5-one (MIO), which is formed autocatalytically by cyclization and dehydration of residues Ala-Ser-Gly.

The protein resides in the cytoplasm. It carries out the reaction L-histidine = trans-urocanate + NH4(+). Its pathway is amino-acid degradation; L-histidine degradation into L-glutamate; N-formimidoyl-L-glutamate from L-histidine: step 1/3. In Halobacterium salinarum (strain ATCC 29341 / DSM 671 / R1), this protein is Probable histidine ammonia-lyase.